Here is a 297-residue protein sequence, read N- to C-terminus: tRNA dimethylallyltransferase (297 aa).

15-22 lines the ATP pocket; the sequence is GPTASGKS. 17–22 serves as a coordination point for substrate; the sequence is TASGKS. 2 interaction with substrate tRNA regions span residues 40–43 and 164–168; these read DSMQ and QRIVR.

Belongs to the IPP transferase family. Monomer. Requires Mg(2+) as cofactor.

It catalyses the reaction adenosine(37) in tRNA + dimethylallyl diphosphate = N(6)-dimethylallyladenosine(37) in tRNA + diphosphate. Functionally, catalyzes the transfer of a dimethylallyl group onto the adenine at position 37 in tRNAs that read codons beginning with uridine, leading to the formation of N6-(dimethylallyl)adenosine (i(6)A). This is tRNA dimethylallyltransferase from Rhizobium johnstonii (strain DSM 114642 / LMG 32736 / 3841) (Rhizobium leguminosarum bv. viciae).